The following is a 477-amino-acid chain: Methylenetetrahydrofolate--tRNA-(uracil-5-)-methyltransferase TrmFO (477 aa).

15 to 20 (GAGLAG) provides a ligand contact to FAD.

It belongs to the MnmG family. TrmFO subfamily. FAD is required as a cofactor.

The protein resides in the cytoplasm. It carries out the reaction uridine(54) in tRNA + (6R)-5,10-methylene-5,6,7,8-tetrahydrofolate + NADH + H(+) = 5-methyluridine(54) in tRNA + (6S)-5,6,7,8-tetrahydrofolate + NAD(+). It catalyses the reaction uridine(54) in tRNA + (6R)-5,10-methylene-5,6,7,8-tetrahydrofolate + NADPH + H(+) = 5-methyluridine(54) in tRNA + (6S)-5,6,7,8-tetrahydrofolate + NADP(+). In terms of biological role, catalyzes the folate-dependent formation of 5-methyl-uridine at position 54 (M-5-U54) in all tRNAs. This chain is Methylenetetrahydrofolate--tRNA-(uracil-5-)-methyltransferase TrmFO, found in Rhodopseudomonas palustris (strain BisB5).